The chain runs to 146 residues: Basic phospholipase A2 (146 aa).

An N-terminal signal peptide occupies residues 1-21 (MNPAHLLVLAAVCVSLLGASS). Positions 22–27 (VPPRPL) are excised as a propeptide. 7 disulfide bridges follow: Cys38-Cys97, Cys52-Cys145, Cys54-Cys70, Cys69-Cys127, Cys76-Cys120, Cys86-Cys113, and Cys106-Cys118. Residues Tyr53, Gly55, and Gly57 each coordinate Ca(2+). His73 is a catalytic residue. Asp74 is a binding site for Ca(2+). The N-linked (GlcNAc...) asparagine glycan is linked to Asn109. The active site involves Asp121.

Belongs to the phospholipase A2 family. Group I subfamily. D49 sub-subfamily. The cofactor is Ca(2+). In terms of tissue distribution, expressed by the venom gland.

The protein resides in the secreted. It catalyses the reaction a 1,2-diacyl-sn-glycero-3-phosphocholine + H2O = a 1-acyl-sn-glycero-3-phosphocholine + a fatty acid + H(+). In terms of biological role, PLA2 catalyzes the calcium-dependent hydrolysis of the 2-acyl groups in 3-sn-phosphoglycerides. The sequence is that of Basic phospholipase A2 from Micrurus corallinus (Brazilian coral snake).